The sequence spans 36 residues: Kappa-theraphotoxin-Pg1b (36 aa).

3 disulfides stabilise this stretch: Cys4/Cys19, Cys11/Cys24, and Cys18/Cys31.

It belongs to the neurotoxin 10 (Hwtx-1) family. 44 (Jztx-4) subfamily. As to expression, expressed by the venom gland.

The protein resides in the secreted. Its function is as follows. Gating modifier of Kv2.1/KCNB1, Kv2.2/KCNB2 and Kv4.3/KCND3 channels. The protein is Kappa-theraphotoxin-Pg1b of Chilobrachys guangxiensis (Chinese earth tiger tarantula).